Reading from the N-terminus, the 226-residue chain is 2-C-methyl-D-erythritol 4-phosphate cytidylyltransferase (226 aa).

Belongs to the IspD/TarI cytidylyltransferase family. IspD subfamily.

It catalyses the reaction 2-C-methyl-D-erythritol 4-phosphate + CTP + H(+) = 4-CDP-2-C-methyl-D-erythritol + diphosphate. The protein operates within isoprenoid biosynthesis; isopentenyl diphosphate biosynthesis via DXP pathway; isopentenyl diphosphate from 1-deoxy-D-xylulose 5-phosphate: step 2/6. Its function is as follows. Catalyzes the formation of 4-diphosphocytidyl-2-C-methyl-D-erythritol from CTP and 2-C-methyl-D-erythritol 4-phosphate (MEP). This Clostridium beijerinckii (strain ATCC 51743 / NCIMB 8052) (Clostridium acetobutylicum) protein is 2-C-methyl-D-erythritol 4-phosphate cytidylyltransferase.